A 260-amino-acid chain; its full sequence is Triosephosphate isomerase (260 aa).

10 to 12 (NWK) provides a ligand contact to substrate. The Electrophile role is filled by H100. The active-site Proton acceptor is E172. Substrate-binding positions include G178, S218, and 239–240 (GG).

This sequence belongs to the triosephosphate isomerase family. Homodimer.

It is found in the cytoplasm. It carries out the reaction D-glyceraldehyde 3-phosphate = dihydroxyacetone phosphate. The protein operates within carbohydrate biosynthesis; gluconeogenesis. It functions in the pathway carbohydrate degradation; glycolysis; D-glyceraldehyde 3-phosphate from glycerone phosphate: step 1/1. Functionally, involved in the gluconeogenesis. Catalyzes stereospecifically the conversion of dihydroxyacetone phosphate (DHAP) to D-glyceraldehyde-3-phosphate (G3P). The protein is Triosephosphate isomerase of Corynebacterium diphtheriae (strain ATCC 700971 / NCTC 13129 / Biotype gravis).